Consider the following 217-residue polypeptide: Large ribosomal subunit protein bL25 (217 aa).

The tract at residues 185 to 217 (TKETVEDEEAEEAAAEGAEETGETGETEEGGDE) is disordered. The span at 189-217 (VEDEEAEEAAAEGAEETGETGETEEGGDE) shows a compositional bias: acidic residues.

This sequence belongs to the bacterial ribosomal protein bL25 family. CTC subfamily. As to quaternary structure, part of the 50S ribosomal subunit; part of the 5S rRNA/L5/L18/L25 subcomplex. Contacts the 5S rRNA. Binds to the 5S rRNA independently of L5 and L18.

This is one of the proteins that binds to the 5S RNA in the ribosome where it forms part of the central protuberance. The polypeptide is Large ribosomal subunit protein bL25 (Desulfosudis oleivorans (strain DSM 6200 / JCM 39069 / Hxd3) (Desulfococcus oleovorans)).